A 511-amino-acid chain; its full sequence is 4,4'-diapophytoene desaturase (4,4'-diapolycopene-forming) (511 aa).

The protein belongs to the carotenoid/retinoid oxidoreductase family.

It carries out the reaction 15-cis-4,4'-diapophytoene + 4 FAD + 4 H(+) = all-trans-4,4'-diapolycopene + 4 FADH2. The protein operates within carotenoid biosynthesis. Functionally, involved in the biosynthesis of C30 carotenoids. Catalyzes four successive dehydrogenation reactions that lead to the introduction of four double bonds into 4,4'-diapophytoene (dehydrosqualene) to yield 4,4'-diapolycopene. The polypeptide is 4,4'-diapophytoene desaturase (4,4'-diapolycopene-forming) (Methylomonas sp).